A 130-amino-acid chain; its full sequence is Small ribosomal subunit protein uS8 (130 aa).

Belongs to the universal ribosomal protein uS8 family. In terms of assembly, part of the 30S ribosomal subunit. Contacts proteins S5 and S12.

Its function is as follows. One of the primary rRNA binding proteins, it binds directly to 16S rRNA central domain where it helps coordinate assembly of the platform of the 30S subunit. In Klebsiella pneumoniae (strain 342), this protein is Small ribosomal subunit protein uS8.